The sequence spans 133 residues: Ribonuclease P protein component (133 aa).

The protein belongs to the RnpA family. As to quaternary structure, consists of a catalytic RNA component (M1 or rnpB) and a protein subunit.

The catalysed reaction is Endonucleolytic cleavage of RNA, removing 5'-extranucleotides from tRNA precursor.. Its function is as follows. RNaseP catalyzes the removal of the 5'-leader sequence from pre-tRNA to produce the mature 5'-terminus. It can also cleave other RNA substrates such as 4.5S RNA. The protein component plays an auxiliary but essential role in vivo by binding to the 5'-leader sequence and broadening the substrate specificity of the ribozyme. The chain is Ribonuclease P protein component from Synechococcus sp. (strain JA-2-3B'a(2-13)) (Cyanobacteria bacterium Yellowstone B-Prime).